We begin with the raw amino-acid sequence, 158 residues long: NAD(P)H-quinone oxidoreductase subunit N (158 aa).

The protein belongs to the complex I NdhN subunit family. NDH-1 can be composed of about 15 different subunits; different subcomplexes with different compositions have been identified which probably have different functions.

Its subcellular location is the cellular thylakoid membrane. The enzyme catalyses a plastoquinone + NADH + (n+1) H(+)(in) = a plastoquinol + NAD(+) + n H(+)(out). It catalyses the reaction a plastoquinone + NADPH + (n+1) H(+)(in) = a plastoquinol + NADP(+) + n H(+)(out). Functionally, NDH-1 shuttles electrons from an unknown electron donor, via FMN and iron-sulfur (Fe-S) centers, to quinones in the respiratory and/or the photosynthetic chain. The immediate electron acceptor for the enzyme in this species is believed to be plastoquinone. Couples the redox reaction to proton translocation, and thus conserves the redox energy in a proton gradient. Cyanobacterial NDH-1 also plays a role in inorganic carbon-concentration. The chain is NAD(P)H-quinone oxidoreductase subunit N from Crocosphaera subtropica (strain ATCC 51142 / BH68) (Cyanothece sp. (strain ATCC 51142)).